Reading from the N-terminus, the 314-residue chain is tRNA dimethylallyltransferase (314 aa).

12-19 contacts ATP; it reads GPTASGKT. 14–19 provides a ligand contact to substrate; that stretch reads TASGKT. Interaction with substrate tRNA stretches follow at residues 37–40 and 162–166; these read DSAL and QRIIR.

This sequence belongs to the IPP transferase family. As to quaternary structure, monomer. It depends on Mg(2+) as a cofactor.

It carries out the reaction adenosine(37) in tRNA + dimethylallyl diphosphate = N(6)-dimethylallyladenosine(37) in tRNA + diphosphate. Its function is as follows. Catalyzes the transfer of a dimethylallyl group onto the adenine at position 37 in tRNAs that read codons beginning with uridine, leading to the formation of N6-(dimethylallyl)adenosine (i(6)A). The polypeptide is tRNA dimethylallyltransferase (Acinetobacter baumannii (strain AB0057)).